The primary structure comprises 149 residues: Transcriptional repressor NrdR (149 aa).

A zinc finger lies at Cys3 to Cys34. An ATP-cone domain is found at Pro49–Glu139.

This sequence belongs to the NrdR family. Requires Zn(2+) as cofactor.

Functionally, negatively regulates transcription of bacterial ribonucleotide reductase nrd genes and operons by binding to NrdR-boxes. This is Transcriptional repressor NrdR from Cronobacter sakazakii (strain ATCC BAA-894) (Enterobacter sakazakii).